The primary structure comprises 83 residues: Hainantoxin-III 5 (83 aa).

Positions 1–21 (MKASRFLALAGLVLLFVVGYA) are cleaved as a signal peptide. Residues 22–48 (SESEEKEFPRELLSKIFAVDDFKGEER) constitute a propeptide that is removed on maturation. 3 disulfide bridges follow: Cys50–Cys65, Cys57–Cys70, and Cys64–Cys77. Leu81 is modified (leucine amide).

It belongs to the neurotoxin 10 (Hwtx-1) family. 15 (Hntx-3) subfamily. Monomer. Expressed by the venom gland.

It localises to the secreted. In terms of biological role, selective antagonist of neuronal tetrodotoxin (TTX)-sensitive voltage-gated sodium channels (IC(50)=1270 nM on Nav1.1/SCN1A, 270 nM on Nav1.2/SCN2A, 491 nM on Nav1.3/SCN3A and 232 nM on Nav1.7/SCN9A). This toxin suppress Nav1.7 current amplitude without significantly altering the activation, inactivation, and repriming kinetics. Short extreme depolarizations partially activate the toxin-bound channel, indicating voltage-dependent inhibition of this toxin. This toxin increases the deactivation of the Nav1.7 current after extreme depolarizations. The toxin-Nav1.7 complex is gradually dissociated upon prolonged strong depolarizations in a voltage-dependent manner, and the unbound toxin rebinds to Nav1.7 after a long repolarization. Moreover, analysis of chimeric channels showed that the DIIS3-S4 linker is critical for toxin binding to Nav1.7. These data are consistent with this toxin interacting with Nav1.7 site 4 and trapping the domain II voltage sensor in the closed state. In Cyriopagopus hainanus (Chinese bird spider), this protein is Hainantoxin-III 5.